Consider the following 500-residue polypeptide: Glycerol kinase (500 aa).

Threonine 13 provides a ligand contact to ADP. ATP-binding residues include threonine 13, threonine 14, and serine 15. Threonine 13 contributes to the sn-glycerol 3-phosphate binding site. An ADP-binding site is contributed by arginine 17. Sn-glycerol 3-phosphate is bound by residues arginine 83, glutamate 84, tyrosine 135, and aspartate 244. Glycerol contacts are provided by arginine 83, glutamate 84, tyrosine 135, aspartate 244, and glutamine 245. The ADP site is built by threonine 266 and glycine 309. ATP is bound by residues threonine 266, glycine 309, glutamine 313, and glycine 410. The ADP site is built by glycine 410 and asparagine 414.

It belongs to the FGGY kinase family.

It carries out the reaction glycerol + ATP = sn-glycerol 3-phosphate + ADP + H(+). It participates in polyol metabolism; glycerol degradation via glycerol kinase pathway; sn-glycerol 3-phosphate from glycerol: step 1/1. With respect to regulation, inhibited by fructose 1,6-bisphosphate (FBP). Functionally, key enzyme in the regulation of glycerol uptake and metabolism. Catalyzes the phosphorylation of glycerol to yield sn-glycerol 3-phosphate. In Burkholderia cenocepacia (strain HI2424), this protein is Glycerol kinase.